A 100-amino-acid chain; its full sequence is Tachykinin-4 (100 aa).

A signal peptide spans 1 to 19 (MPSSVTLLLLMGLSVCTSA). 2 consecutive propeptides follow at residues 20 to 55 (EDGG…LQEV) and 85 to 100 (RASS…QGAE). The interval 80 to 100 (GLLGRRASSTKGSVDEDQGAE) is disordered.

Belongs to the tachykinin family.

It localises to the secreted. In terms of biological role, tachykinins are active peptides which excite neurons, evoke behavioral responses, are potent vasodilators and secretagogues, and contract (directly or indirectly) many smooth muscles. This Oryctolagus cuniculus (Rabbit) protein is Tachykinin-4.